A 614-amino-acid chain; its full sequence is Vitamin B12 transporter BtuB (614 aa).

Positions 1–20 (MIKKASLLTACSVTAFSAWA) are cleaved as a signal peptide. The TonB box motif lies at 26–33 (DTLVVTAN). The TBDR plug domain maps to 38–152 (PRSTVLAPTT…IGGVVNIITT (115 aa)). Cyanocob(III)alamin contacts are provided by residues Leu-83, Ser-85, Asn-92, and 110 to 111 (GS). A TBDR beta-barrel domain is found at 155–614 (EPGTEISAGW…EYTLSGSYTF (460 aa)). 3 beta stranded membrane-spanning segments follow: residues 158–165 (TEISAGWG), 169–178 (YQNYDVSTQQ), and 184–195 (TRVTLLGDYAHT). Ca(2+) is bound by residues Asp-199, Gln-211, Asp-213, and Asp-215. 2 beta stranded membrane passes run 217-227 (FLSKTLYGALE) and 232-248 (DAWS…NRTN). 2 residues coordinate Ca(2+): Tyr-249 and Asp-250. Ala-251 contacts cyanocob(III)alamin. A Ca(2+)-binding site is contributed by Asp-261. 14 consecutive transmembrane segments (beta stranded) span residues 263-277 (RKLY…LRYN), 279-296 (ELIK…KDYN), 309-325 (TLDE…NNII), 328-337 (HGNVGAGVDW), 353-369 (YDQR…QQVG), 371-381 (FTFEGAARSDD), 385-400 (FGRH…WEFI), 403-417 (YRFI…KAPN), 434-443 (KSKQWEGAFE), 449-458 (VNWRISGYRN), 473-490 (YYNE…TANF), 494-509 (PLTH…ARNA), 517-529 (RRAK…QLDW), and 535-550 (DWGI…YDKD). Residue Thr-309 participates in cyanocob(III)alamin binding. Arg-517 provides a ligand contact to cyanocob(III)alamin. Tyr-551 provides a ligand contact to cyanocob(III)alamin. Transmembrane regions (beta stranded) follow at residues 558–572 (TVKM…LAVA), 585–596 (IANLFDKDYETV), and 602–614 (AGRE…SYTF). The TonB C-terminal box signature appears at 597-614 (YGYQTAGREYTLSGSYTF).

It belongs to the TonB-dependent receptor family. BtuB (TC 1.B.14.3.1) subfamily.

The protein resides in the cell outer membrane. Functionally, involved in the active translocation of vitamin B12 (cyanocobalamin) across the outer membrane to the periplasmic space. It derives its energy for transport by interacting with the trans-periplasmic membrane protein TonB. In Escherichia coli O157:H7, this protein is Vitamin B12 transporter BtuB.